The sequence spans 288 residues: Bis(5'-nucleosyl)-tetraphosphatase, symmetrical (288 aa).

The protein belongs to the Ap4A hydrolase family.

The enzyme catalyses P(1),P(4)-bis(5'-adenosyl) tetraphosphate + H2O = 2 ADP + 2 H(+). Hydrolyzes diadenosine 5',5'''-P1,P4-tetraphosphate to yield ADP. The sequence is that of Bis(5'-nucleosyl)-tetraphosphatase, symmetrical from Pseudomonas putida (strain W619).